Consider the following 225-residue polypeptide: Suppressor of cytokine signaling 3 (225 aa).

The segment at 22–33 is kinase inhibitory region (KIR); sequence LKTFSSKSEYQL. Residues 34 to 45 form an extended SH2 subdomain (ESS) region; that stretch reads VVNAVRKLQESG. Positions 46–142 constitute an SH2 domain; sequence FYWSAVTGGE…TPSFSLPPTE (97 aa). The tract at residues 131–160 is disordered; it reads PGTPSFSLPPTEPSSEVPEQPPAQALPGST. The 48-residue stretch at 177 to 224 folds into the SOCS box domain; the sequence is VLSRPLSSNVATLQHLCRKTVNGHLDSYEKVTQLPGPIREFLDQYDAP.

In terms of assembly, interacts with multiple activated proteins of the tyrosine kinase signaling pathway including IGF1 receptor, insulin receptor and JAK2. Binding to JAK2 is mediated through the KIR and SH2 domains to a phosphorylated tyrosine residue within the JAK2 JH1 domain. Binds specific activated tyrosine residues of the leptin, EPO, IL12, GSCF and gp130 receptors. Interaction with CSNK1E stabilizes SOCS3 protein. Component of the probable ECS(SOCS3) E3 ubiquitin-protein ligase complex which contains CUL5, RNF7/RBX2, elongin BC complex and SOCS3. Interacts with CUL5, RNF7, ELOB and ELOC. Interacts with FGFR3. Interacts with INSR. Interacts with BCL10; this interaction may interfere with BCL10-binding with PELI2. Interacts with NOD2 (via CARD domain); the interaction promotes NOD2 degradation. In terms of processing, phosphorylated on tyrosine residues after stimulation by the cytokines, IL-2, EPO or IGF1. Low expression in lung, spleen and thymus. Expressed in Th2 but not TH1 cells.

It functions in the pathway protein modification; protein ubiquitination. Functionally, SOCS family proteins form part of a classical negative feedback system that regulates cytokine signal transduction. SOCS3 is involved in negative regulation of cytokines that signal through the JAK/STAT pathway. Inhibits cytokine signal transduction by binding to tyrosine kinase receptors including IL6ST/gp130, LIF, erythropoietin, insulin, IL12, GCSF and leptin receptors. Binding to JAK2 inhibits its kinase activity and regulates IL6 signaling. Suppresses fetal liver erythropoiesis. Regulates onset and maintenance of allergic responses mediated by T-helper type 2 cells. Probable substrate recognition component of a SCF-like ECS (Elongin BC-CUL2/5-SOCS-box protein) E3 ubiquitin-protein ligase complex which mediates the ubiquitination and subsequent proteasomal degradation of target proteins. In Mus musculus (Mouse), this protein is Suppressor of cytokine signaling 3.